The following is a 582-amino-acid chain: Phosphoribosylaminoimidazole carboxylase (582 aa).

Positions 114 to 305 (KKYLAERGVA…QFENHLRAIL (192 aa)) constitute an ATP-grasp domain. 143–200 (AGRLGLPLMLKAKTLAYDGRGNSPLKSASSEDIQASLKFLGDRPLYAEGWAPFVKEVA) provides a ligand contact to ATP.

In the C-terminal section; belongs to the AIR carboxylase family. Class I subfamily.

It carries out the reaction 5-amino-1-(5-phospho-D-ribosyl)imidazole-4-carboxylate + H(+) = 5-amino-1-(5-phospho-beta-D-ribosyl)imidazole + CO2. It functions in the pathway purine metabolism; IMP biosynthesis via de novo pathway; 5-amino-1-(5-phospho-D-ribosyl)imidazole-4-carboxylate from 5-amino-1-(5-phospho-D-ribosyl)imidazole (carboxylase route): step 1/1. This is Phosphoribosylaminoimidazole carboxylase (ADE2) from Cryptococcus neoformans var. neoformans serotype D (strain B-3501A) (Filobasidiella neoformans).